Consider the following 157-residue polypeptide: 3-hydroxybutyryl-CoA dehydratase (157 aa).

The MaoC-like domain occupies 22–120 (KKEISSSDVV…IPERRRARLA (99 aa)).

It carries out the reaction (3R)-3-hydroxybutanoyl-CoA = (2E)-butenoyl-CoA + H2O. In terms of biological role, involved in the regeneration of glyoxylate from a molecule of acetyl-CoA. In Methylorubrum extorquens (strain ATCC 14718 / DSM 1338 / JCM 2805 / NCIMB 9133 / AM1) (Methylobacterium extorquens), this protein is 3-hydroxybutyryl-CoA dehydratase.